The following is an 80-amino-acid chain: DNA-directed RNA polymerase subunit Rpo5 (80 aa).

Belongs to the archaeal Rpo5/eukaryotic RPB5 RNA polymerase subunit family. Part of the RNA polymerase complex.

The protein localises to the cytoplasm. It catalyses the reaction RNA(n) + a ribonucleoside 5'-triphosphate = RNA(n+1) + diphosphate. DNA-dependent RNA polymerase (RNAP) catalyzes the transcription of DNA into RNA using the four ribonucleoside triphosphates as substrates. This chain is DNA-directed RNA polymerase subunit Rpo5, found in Thermofilum pendens (strain DSM 2475 / Hrk 5).